Here is a 317-residue protein sequence, read N- to C-terminus: Protein translocase subunit SecF (317 aa).

6 consecutive transmembrane segments (helical) span residues 11-31, 135-155, 166-186, 197-217, 244-266, and 276-298; these read FYLL…LFGL, RSIV…AFAF, ICAI…FAIL, LFVT…IVVF, LVRS…FFGG, and LLIG…LVSW.

Belongs to the SecD/SecF family. SecF subfamily. Forms a complex with SecD. Part of the essential Sec protein translocation apparatus which comprises SecA, SecYEG and auxiliary proteins SecDF. Other proteins may also be involved.

The protein localises to the cell membrane. In terms of biological role, part of the Sec protein translocase complex. Interacts with the SecYEG preprotein conducting channel. SecDF uses the proton motive force (PMF) to complete protein translocation after the ATP-dependent function of SecA. This is Protein translocase subunit SecF from Thermobaculum terrenum (strain ATCC BAA-798 / CCMEE 7001 / YNP1).